An 840-amino-acid polypeptide reads, in one-letter code: MTQELKSKLLSFFKFIFATALFIFVIFTLYRELSHINFKETFIQFGKINRLWLVLLFAGGGLSLILLSLYDIILVKALKLKMPLIRVFRVSYIINALNSIIGFGGFIGAGVRAFVYKNYTNDTKKLVQYISIILVSMLTGLSLLSILVVLRIFNASHMIDEISWVRWILYIVALFLPIFIFYTVARPVDRNNRYMGVYCTVVSCVEWMAAATVLYFAALIVDIHISFMTFVGIFVIAALSGLVSFIPGGFGAFDLVVLLGLKSLGISEEKILLALVLYRFAYYFVPVMIALILSSFEFGNTAKKYLDNSKYFIPVKDFTSFLRSYQKDILAKVPSFSLAILIFLTSIIFFINNLTIVYDGLYDGNHFAYYIALAVQTSACLLLILNVRGIYKGSRRAIIYAFISIILIASATIYTYASFLLLSWLIIIFVLLILAYQRAQVLKRPLRFKKLAVMLLLSIFILYLNHILISGTLYALDVYHIEIDTSLLRYYFWMTIVIIMLLVGVIAWLFDYKYKCPHHSIDLTLCDAIIQKYGGNYLSHLVYSGDKDCFFNENKDSFIMYRYKSNALVVLGDPIGNTKSFESLLEAFYQFAEYQGYEIIFYQISDQYMPLYHNFGNQFFKLGEEAIIDLTTFTTSGKKRRGFRATLNKFDDLNINFEIIEPPFTQDFFDELKFVSDKWLDGRSEMHFSVGQFTQTYLSKAPIGVMRDHSGKMIAFCSLMPTYSNNAISVDLIRWLPELDLPLMDGLYLHMLLWSKEKGYKAFNMGMATLSNVGQLHYSYLRERMAGRVFEHFNGLYRFQGLRRYKEKYSPNWEPRFLVYQKHYSLWESMLKVMRVIRHK.

Residues 1–8 lie on the Cytoplasmic side of the membrane; sequence MTQELKSK. Residues 9 to 29 form a helical membrane-spanning segment; that stretch reads LLSFFKFIFATALFIFVIFTL. Over 30-52 the chain is Extracellular; the sequence is YRELSHINFKETFIQFGKINRLW. Residues 53–73 form a helical membrane-spanning segment; that stretch reads LVLLFAGGGLSLILLSLYDII. Topologically, residues 74 to 89 are cytoplasmic; sequence LVKALKLKMPLIRVFR. The chain crosses the membrane as a helical span at residues 90–110; that stretch reads VSYIINALNSIIGFGGFIGAG. Over 111-129 the chain is Extracellular; that stretch reads VRAFVYKNYTNDTKKLVQY. The chain crosses the membrane as a helical span at residues 130–150; the sequence is ISIILVSMLTGLSLLSILVVL. Topologically, residues 151-161 are cytoplasmic; it reads RIFNASHMIDE. The helical transmembrane segment at 162-182 threads the bilayer; the sequence is ISWVRWILYIVALFLPIFIFY. Topologically, residues 183-200 are extracellular; it reads TVARPVDRNNRYMGVYCT. A helical membrane pass occupies residues 201–221; sequence VVSCVEWMAAATVLYFAALIV. At 222–229 the chain is on the cytoplasmic side; the sequence is DIHISFMT. The helical transmembrane segment at 230-250 threads the bilayer; sequence FVGIFVIAALSGLVSFIPGGF. The Extracellular portion of the chain corresponds to 251 to 270; the sequence is GAFDLVVLLGLKSLGISEEK. Residues 271 to 291 form a helical membrane-spanning segment; the sequence is ILLALVLYRFAYYFVPVMIAL. Over 292-337 the chain is Cytoplasmic; the sequence is ILSSFEFGNTAKKYLDNSKYFIPVKDFTSFLRSYQKDILAKVPSFS. Residues 338–358 traverse the membrane as a helical segment; the sequence is LAILIFLTSIIFFINNLTIVY. Over 359-366 the chain is Extracellular; the sequence is DGLYDGNH. Residues 367-387 traverse the membrane as a helical segment; that stretch reads FAYYIALAVQTSACLLLILNV. The Cytoplasmic segment spans residues 388–392; that stretch reads RGIYK. Residues 393–413 form a helical membrane-spanning segment; the sequence is GSRRAIIYAFISIILIASATI. The Extracellular portion of the chain corresponds to 414–415; that stretch reads YT. The chain crosses the membrane as a helical span at residues 416–436; the sequence is YASFLLLSWLIIIFVLLILAY. At 437–450 the chain is on the cytoplasmic side; that stretch reads QRAQVLKRPLRFKK. The chain crosses the membrane as a helical span at residues 451–471; the sequence is LAVMLLLSIFILYLNHILISG. The Extracellular segment spans residues 472-489; that stretch reads TLYALDVYHIEIDTSLLR. The chain crosses the membrane as a helical span at residues 490–510; it reads YYFWMTIVIIMLLVGVIAWLF. Residues 511-840 are Cytoplasmic-facing; that stretch reads DYKYKCPHHS…LKVMRVIRHK (330 aa).

It belongs to the LPG synthase family.

It is found in the cell membrane. The enzyme catalyses L-lysyl-tRNA(Lys) + a 1,2-diacyl-sn-glycero-3-phospho-(1'-sn-glycerol) = a 1,2-diacyl-sn-glycero-3-phospho-1'-(3'-O-L-lysyl)-sn-glycerol + tRNA(Lys). Catalyzes the transfer of a lysyl group from L-lysyl-tRNA(Lys) to membrane-bound phosphatidylglycerol (PG), which produces lysylphosphatidylglycerol (LPG), a major component of the bacterial membrane with a positive net charge. LPG synthesis contributes to bacterial virulence as it is involved in the resistance mechanism against cationic antimicrobial peptides (CAMP) produces by the host's immune system (defensins, cathelicidins) and by the competing microorganisms (bacteriocins). In fact, the modification of anionic phosphatidylglycerol with positively charged L-lysine results in repulsion of the peptides. The polypeptide is Phosphatidylglycerol lysyltransferase (mprF) (Staphylococcus epidermidis (strain ATCC 12228 / FDA PCI 1200)).